The chain runs to 103 residues: MAKKSLIQREKKRQKLEQKYHLIRRSSKKKIRSKVSPLSLSEKTKMQEKLQSLPRNSAPTRLHRRCFLTGRPRANYRDFGLSGHILREMVYACLLPGATRSSW.

Positions 27 to 56 (SKKKIRSKVSPLSLSEKTKMQEKLQSLPRN) are disordered.

This sequence belongs to the universal ribosomal protein uS14 family. In terms of assembly, part of the 30S ribosomal subunit.

Its subcellular location is the plastid. The protein resides in the chloroplast. Its function is as follows. Binds 16S rRNA, required for the assembly of 30S particles. The polypeptide is Small ribosomal subunit protein uS14c (Zea mays (Maize)).